The primary structure comprises 805 residues: Mitochondrial inner membrane m-AAA protease component AFG3L2 (805 aa).

The N-terminal 39 residues, 1–39, are a transit peptide targeting the mitochondrion; that stretch reads MAHRCLLLWGRGACRPRGMPPMLLPGGRTGSTERLYLRM. Positions 40–67 are cleaved as a propeptide — removed in mature form; sequence LYRYATTQAKTSRNSLLTDVIAAYQRLC. Residues 74-127 are disordered; it reads FEKYFPNGKNGKKTSEPKEVMGEKKEPKPAAAPRPSGGGVGGGGKRGGKKDDSH. Residues 86–101 are compositionally biased toward basic and acidic residues; sequence KTSEPKEVMGEKKEPK. Residues 109-118 show a composition bias toward gly residues; it reads SGGGVGGGGK. At Lys-118 the chain carries N6-succinyllysine. The next 2 helical transmembrane spans lie at 144-164 and 252-272; these read FKMY…YFLF and GSFL…LYTI. Residues Val-311, Ala-312, Thr-353, Gly-354, Lys-355, Thr-356, Leu-357, and His-491 each contribute to the ATP site. Residue His-575 participates in Zn(2+) binding. Glu-576 is a catalytic residue. Residues His-579 and Asp-650 each coordinate Zn(2+). Residues 760–805 are disordered; the sequence is FVEGTGSLDEDTSLPEGLKDWNREREGSEEPSGEKVTSPVQGAGPA. The segment covering 776-787 has biased composition (basic and acidic residues); the sequence is GLKDWNREREGS.

The protein in the N-terminal section; belongs to the AAA ATPase family. In the C-terminal section; belongs to the peptidase M41 family. Homohexamer. Forms heterohexamers with SPG7. The m-AAA protease is either composed of homohexamers of AFG3L2 or heterohexamers of AFG3L2 and SPG7. Interacts with MAIP1. Interacts with DNAJC19. Interacts with PHB2. The cofactor is Zn(2+). In terms of processing, upon import into the mitochondrion, the N-terminal transit peptide is cleaved to generate an intermediate form which undergoes autocatalytic proteolytic processing to generate the proteolytically active mature form.

The protein localises to the mitochondrion inner membrane. It carries out the reaction ATP + H2O = ADP + phosphate + H(+). Its function is as follows. Catalytic component of the m-AAA protease, a protease that plays a key role in proteostasis of inner mitochondrial membrane proteins, and which is essential for axonal and neuron development. AFG3L2 possesses both ATPase and protease activities: the ATPase activity is required to unfold substrates, threading them into the internal proteolytic cavity for hydrolysis into small peptide fragments. The m-AAA protease carries out protein quality control in the inner membrane of the mitochondria by mediating degradation of mistranslated or misfolded polypeptides. The m-AAA protease complex also promotes the processing and maturation of mitochondrial proteins, such as MRPL32/bL32m, PINK1 and SP7. Mediates protein maturation of the mitochondrial ribosomal subunit MRPL32/bL32m by catalyzing the cleavage of the presequence of MRPL32/bL32m prior to assembly into the mitochondrial ribosome. Required for SPG7 maturation into its active mature form after SPG7 cleavage by mitochondrial-processing peptidase (MPP). Required for the maturation of PINK1 into its 52kDa mature form after its cleavage by mitochondrial-processing peptidase (MPP). Acts as a regulator of calcium in neurons by mediating degradation of SMDT1/EMRE before its assembly with the uniporter complex, limiting the availability of SMDT1/EMRE for MCU assembly and promoting efficient assembly of gatekeeper subunits with MCU. Promotes the proteolytic degradation of GHITM upon hyperpolarization of mitochondria: progressive GHITM degradation leads to respiratory complex I degradation and broad reshaping of the mitochondrial proteome by AFG3L2. Also acts as a regulator of mitochondrial glutathione homeostasis by mediating cleavage and degradation of SLC25A39. SLC25A39 cleavage is prevented when SLC25A39 binds iron-sulfur. Involved in the regulation of OMA1-dependent processing of OPA1. May act by mediating processing of OMA1 precursor, participating in OMA1 maturation. This Bos taurus (Bovine) protein is Mitochondrial inner membrane m-AAA protease component AFG3L2 (AFG3L2).